The chain runs to 117 residues: Large ribosomal subunit protein bL19 (117 aa).

This sequence belongs to the bacterial ribosomal protein bL19 family.

Its function is as follows. This protein is located at the 30S-50S ribosomal subunit interface and may play a role in the structure and function of the aminoacyl-tRNA binding site. In Desulfotalea psychrophila (strain LSv54 / DSM 12343), this protein is Large ribosomal subunit protein bL19.